A 475-amino-acid polypeptide reads, in one-letter code: tRNA modification GTPase MnmE (475 aa).

Residues Arg32, Glu97, and Lys136 each coordinate (6S)-5-formyl-5,6,7,8-tetrahydrofolate. The TrmE-type G domain occupies 232-396; the sequence is GVATVIAGRP…LKSRMSSMVE (165 aa). Residues 242-247, 261-267, 286-289, and 377-379 contribute to the GTP site; these read NAGKST, SHMPGTT, DTAG, and SAR. Mg(2+)-binding residues include Ser246 and Thr267. Lys475 provides a ligand contact to (6S)-5-formyl-5,6,7,8-tetrahydrofolate.

It belongs to the TRAFAC class TrmE-Era-EngA-EngB-Septin-like GTPase superfamily. TrmE GTPase family. In terms of assembly, homodimer. Heterotetramer of two MnmE and two MnmG subunits. It depends on K(+) as a cofactor.

Its subcellular location is the cytoplasm. Functionally, exhibits a very high intrinsic GTPase hydrolysis rate. Involved in the addition of a carboxymethylaminomethyl (cmnm) group at the wobble position (U34) of certain tRNAs, forming tRNA-cmnm(5)s(2)U34. This is tRNA modification GTPase MnmE from Chlorobium phaeobacteroides (strain DSM 266 / SMG 266 / 2430).